We begin with the raw amino-acid sequence, 348 residues long: Zinc transporter ZIP13 (348 aa).

Over 1–45 the chain is Cytoplasmic; it reads MMIQTAVAQAKTAPAGPGPWSIKDLVDLQYLDELMSIDNLDVWFC. The chain crosses the membrane as a helical span at residues 46 to 66; it reads SLVGSIAIGLSGIFPLLVIPI. Topologically, residues 67 to 83 are lumenal; it reads EAGTALKTEAGCQKLKK. Residues 84 to 104 traverse the membrane as a helical segment; the sequence is LLSFAIGGLLGDVFLHLLPEA. The Cytoplasmic segment spans residues 105 to 118; sequence WAYTSSPGGSHRHY. Residues 119 to 139 form a helical membrane-spanning segment; that stretch reads CTQGLWVIGGLMSFLTLEKMF. The Lumenal portion of the chain corresponds to 140–219; sequence PDEVGDPETK…CIDNFTHGLA (80 aa). The interval 144 to 192 is disordered; it reads GDPETKTSFQRTTSSSSDLSSQFSVSPQTNGICSNNNSDSKPKTDISPY. The segment covering 149-169 has biased composition (low complexity); that stretch reads KTSFQRTTSSSSDLSSQFSVS. Residues 170–182 show a composition bias toward polar residues; that stretch reads PQTNGICSNNNSD. The helical transmembrane segment at 220–240 threads the bilayer; the sequence is VAGSFLVSRKVGFLTTFAILL. The XEXPHE-motif signature appears at 241 to 246; the sequence is HEIPHE. The Cytoplasmic segment spans residues 241–262; that stretch reads HEIPHEVGDFAILLRAGFDRWK. A helical membrane pass occupies residues 263 to 283; the sequence is AARMQLSTALGGVLGACFALC. Residues 284–294 lie on the Lumenal side of the membrane; it reads SQSQHGAENAT. Residues 295–315 traverse the membrane as a helical segment; sequence TWILPFTSGGFLYIALVNVVP. Topologically, residues 316–326 are cytoplasmic; it reads DLLEETNPRNS. Residues 327–347 traverse the membrane as a helical segment; it reads LLQVLLLFSGIGVMALLSIAM. A topological domain (lumenal) is located at residue Asp348.

This sequence belongs to the ZIP transporter (TC 2.A.5) family. As to quaternary structure, homodimer.

It is found in the golgi apparatus membrane. The protein localises to the cytoplasmic vesicle membrane. Its subcellular location is the endoplasmic reticulum membrane. The catalysed reaction is Zn(2+)(in) = Zn(2+)(out). Its function is as follows. Functions as a zinc transporter transporting Zn(2+) from the Golgi apparatus to the cytosol and thus influences the zinc level at least in areas of the cytosol. This is Zinc transporter ZIP13 from Danio rerio (Zebrafish).